Here is a 267-residue protein sequence, read N- to C-terminus: MTLETQMFQNAHSGSQWLLPPLTMLLLFAFADRQTANLPKAVVKRDPPWIQVLKEDTVTLTCEGTHNPGNSSTQWFHNQSSTWGQVQASYTFKATVNDSGEYRCRMAHTSLSDPVHLEVISDWLLLQTPQLVFEEGETITLRCHSWKNKQLTKVLLFQNGKPVRYYYQSSNFSIPKANHSHSGNYYCKAYLGRTMHVSKPVTITVQGSATASTSSLVWFHAAFCLVMCLLFAVDTGLYFCVRRNLQTSGEDWRKSLSVGKYKAPQDK.

A signal peptide spans 1–36; it reads MTLETQMFQNAHSGSQWLLPPLTMLLLFAFADRQTA. Topologically, residues 37-221 are extracellular; that stretch reads NLPKAVVKRD…STSSLVWFHA (185 aa). 2 Ig-like C2-type domains span residues 39–121 and 122–204; these read PKAV…EVIS and DWLL…VTIT. Intrachain disulfides connect Cys62–Cys104 and Cys143–Cys187. 5 N-linked (GlcNAc...) asparagine glycosylation sites follow: Asn70, Asn78, Asn97, Asn171, and Asn178. The chain crosses the membrane as a helical span at residues 222-241; sequence AFCLVMCLLFAVDTGLYFCV. The Cytoplasmic segment spans residues 242 to 267; it reads RRNLQTSGEDWRKSLSVGKYKAPQDK.

In terms of assembly, may form multisubunit complex with other heteroproteins. This association is required for efficient cell-surface expression. Does not associate with CD3 zeta. In terms of tissue distribution, expressed on natural killer cells and macrophages.

It is found in the cell membrane. Receptor for the Fc region of complexed immunoglobulins gamma. Low affinity receptor which binds to IgG1, IgG2a and IgG2b. Mediates neutrophil activation by IgG complexes redundantly with Fcgr4. This chain is Low affinity immunoglobulin gamma Fc region receptor III (Fcgr3), found in Rattus norvegicus (Rat).